Reading from the N-terminus, the 347-residue chain is Protein YIPF3 (347 aa).

Residues 1–28 (MATQAAPASGVRNGAGPEWGGFEENIQG) are disordered. A2 is modified (N-acetylalanine). Topologically, residues 2 to 145 (ATQAAPASGV…PIKMVNFPQK (144 aa)) are cytoplasmic. The helical transmembrane segment at 146–166 (VAGELYGPLMLVFTLVAILLH) threads the bilayer. Residues 167-184 (GMKTSDTIIREGTLMGTA) lie on the Lumenal side of the membrane. A helical membrane pass occupies residues 185–205 (IGTCFGYWLGVSSFIYFLAYL). The Cytoplasmic portion of the chain corresponds to 206–211 (CNAQIT). Residues 212–234 (MLQMLALLGYGLFGHCIVLFITY) traverse the membrane as a helical segment. Residues 235 to 237 (NIH) lie on the Lumenal side of the membrane. The helical transmembrane segment at 238-260 (LHALFYLFWLLLGGLSTLRMVAV) threads the bilayer. Residues 261–271 (LVSRTVGPTQR) lie on the Cytoplasmic side of the membrane. Residues 272–292 (LLLCGTLAALHMLFLLYLHFA) form a helical membrane-spanning segment. The Lumenal portion of the chain corresponds to 293–347 (YHKVVEGILDTLEGPNIPPMQRVPRDIPAVLPAAKLPVAVVNATAKAIAVTLQSH). N334 carries N-linked (GlcNAc...) asparagine glycosylation.

It belongs to the YIP1 family. In terms of assembly, interacts with YIPF4 and YIPF5.

The protein localises to the cell membrane. The protein resides in the golgi apparatus. It is found in the cis-Golgi network membrane. It localises to the cytoplasm. Involved in the maintenance of the Golgi structure. May play a role in hematopoiesis. The polypeptide is Protein YIPF3 (Yipf3) (Rattus norvegicus (Rat)).